Consider the following 598-residue polypeptide: Vanadium-dependent bromoperoxidase (598 aa).

Positions 361, 363, 365, 368, and 370 each coordinate Ca(2+). Vanadate-binding residues include lysine 400 and arginine 408. Residue histidine 480 is part of the active site. Vanadate contacts are provided by serine 485, glycine 486, histidine 487, arginine 547, and histidine 553. The active site involves histidine 487.

Belongs to the vanadium-dependent haloperoxidase family. Homododecamer. It depends on Ca(2+) as a cofactor. The cofactor is vanadate.

It carries out the reaction RH + Br(-) + H2O2 = RBr + 2 H2O.. Its function is as follows. Catalyzes the halogenation of organic substrates in the presence of hydrogen peroxide. The protein is Vanadium-dependent bromoperoxidase of Corallina officinalis (Coral seaweed).